Consider the following 218-residue polypeptide: Protein-methionine-sulfoxide reductase heme-binding subunit MsrQ (218 aa).

5 consecutive transmembrane segments (helical) span residues 8–28 (VIVA…LLGW), 60–80 (FLLI…AVLI), 86–106 (LGLY…TLDL), 121–141 (PYIT…ITST), and 155–175 (VHML…WLVK).

The protein belongs to the MsrQ family. In terms of assembly, heterodimer of a catalytic subunit (MsrP) and a heme-binding subunit (MsrQ). FMN serves as cofactor. Heme b is required as a cofactor.

Its subcellular location is the cell inner membrane. In terms of biological role, part of the MsrPQ system that repairs oxidized periplasmic proteins containing methionine sulfoxide residues (Met-O), using respiratory chain electrons. Thus protects these proteins from oxidative-stress damage caused by reactive species of oxygen and chlorine generated by the host defense mechanisms. MsrPQ is essential for the maintenance of envelope integrity under bleach stress, rescuing a wide series of structurally unrelated periplasmic proteins from methionine oxidation. MsrQ provides electrons for reduction to the reductase catalytic subunit MsrP, using the quinone pool of the respiratory chain. This chain is Protein-methionine-sulfoxide reductase heme-binding subunit MsrQ, found in Xanthomonas oryzae pv. oryzae (strain MAFF 311018).